Here is a 488-residue protein sequence, read N- to C-terminus: Malonate-semialdehyde dehydrogenase (488 aa).

The NAD(+) site is built by Ala-150, Phe-152, Lys-176, Glu-179, Arg-180, Ser-229, and Thr-251. The active-site Nucleophile is the Cys-284. Glu-382 is an NAD(+) binding site.

The protein belongs to the aldehyde dehydrogenase family. IolA subfamily. As to quaternary structure, homotetramer.

The catalysed reaction is 3-oxopropanoate + NAD(+) + CoA + H2O = hydrogencarbonate + acetyl-CoA + NADH + H(+). It carries out the reaction 2-methyl-3-oxopropanoate + NAD(+) + CoA + H2O = propanoyl-CoA + hydrogencarbonate + NADH + H(+). It functions in the pathway polyol metabolism; myo-inositol degradation into acetyl-CoA; acetyl-CoA from myo-inositol: step 7/7. In terms of biological role, catalyzes the oxidation of malonate semialdehyde (MSA) and methylmalonate semialdehyde (MMSA) into acetyl-CoA and propanoyl-CoA, respectively. Is involved in a myo-inositol catabolic pathway. Bicarbonate, and not CO2, is the end-product of the enzymatic reaction. This Listeria innocua serovar 6a (strain ATCC BAA-680 / CLIP 11262) protein is Malonate-semialdehyde dehydrogenase.